A 283-amino-acid polypeptide reads, in one-letter code: Pre-protein-C8 (283 aa).

The tat-type signal signal peptide spans methionine 1–alanine 40. Residues alanine 61–glutamine 75 form a helix-loop-helix (HLH) region region.

Immunity protein HalI interacts with Halocin-C8; the interaction is direct. In terms of processing, predicted to be exported by the Tat system. The position of the signal peptide cleavage has not been experimentally proven.

The protein resides in the secreted. It is found in the cell membrane. In terms of biological role, has antibacterial activity against a wide variety of haloarchaeons. Causes cell lysis and death, possibly by disrupting the cell wall. Its function is as follows. Acts as an immunity protein for halocin-C8. Able to block the halocin-C8 activity by sequestering the activity of halocin-C8 through specific and direct binding. This Halobacterium sp. (strain AS7092) protein is Pre-protein-C8 (proC8).